A 1680-amino-acid polypeptide reads, in one-letter code: SWI/SNF chromatin-remodeling complex subunit snf22 (1680 aa).

4 disordered regions span residues 61–135 (QQMR…SQAS), 203–258 (NNSF…HSFS), 274–300 (RRGS…ASPY), and 367–427 (YVYR…VPPT). The segment covering 62–91 (QMRNQSSEFPDAENTNLRKQQDTLPTTGFN) has biased composition (polar residues). Low complexity-rich tracts occupy residues 118-127 (GNGNVGLNNP) and 222-233 (SSLPHSFASPSS). Residues 234-245 (TFEQPHTVQSRA) show a composition bias toward polar residues. Composition is skewed to low complexity over residues 247 to 258 (SVDTTSSSHSFS), 282 to 299 (PSTF…LASP), and 374 to 392 (PPSA…SVDP). A compositionally biased stretch (polar residues) spans 406–419 (PSPSASALKTQSHV). Residues 429 to 465 (KLNHAQLAMLKSQIVAYNCLNSPNGQVPPAVQQAIFG) enclose the QLQ domain. The segment covering 477–489 (SMPFQQNVPQMSS) has biased composition (polar residues). The segment at 477–499 (SMPFQQNVPQMSSVKKDTPTRDA) is disordered. Residues 490–499 (VKKDTPTRDA) show a composition bias toward basic and acidic residues. In terms of domain architecture, HSA spans 704-776 (QKTEHAMRQK…ARQRLQALRA (73 aa)). The segment covering 817–832 (SNIHSGNTSGKGSNSA) has biased composition (polar residues). Positions 817–836 (SNIHSGNTSGKGSNSAELEA) are disordered. The Helicase ATP-binding domain occupies 881 to 1046 (LSLYNNNLNG…WALLNFVLPK (166 aa)). Residue 894–901 (DEMGLGKT) coordinates ATP. The short motif at 996–999 (DEGH) is the DEGH box element. The Helicase C-terminal domain occupies 1191-1354 (LLDRILPKLF…STPEEREAFL (164 aa)). Residues 1466–1511 (TVDDPSSTLMPRKRGRPRKKTNSGSSLSTPLSQESSLARSGRKNTP) are disordered. The span at 1476–1486 (PRKRGRPRKKT) shows a compositional bias: basic residues. The segment covering 1488–1502 (SGSSLSTPLSQESSL) has biased composition (low complexity). One can recognise a Bromo domain in the interval 1513–1623 (YKQKALRRYC…KTLKEVIEDL (111 aa)).

The protein belongs to the SNF2/RAD54 helicase family. Component of the SWI/SNF global transcription activator complex composed of at least arp9, arp42, snf5, snf22, snf30, sbf59, sol1, ssr1, ssr2, ssr3, ssr4 and tfg3.

Its subcellular location is the nucleus. Functionally, helicase. Component of the SWI/SNF complex, an ATP-dependent chromatin remodeling complex, required for the positive and negative regulation of gene expression of a large number of genes. It changes chromatin structure by altering DNA-histone contacts within a nucleosome, leading eventually to a change in nucleosome position, thus facilitating or repressing binding of gene-specific transcription factors. The polypeptide is SWI/SNF chromatin-remodeling complex subunit snf22 (snf22) (Schizosaccharomyces pombe (strain 972 / ATCC 24843) (Fission yeast)).